The following is a 122-amino-acid chain: Prefoldin subunit 1 (122 aa).

This sequence belongs to the prefoldin subunit beta family. As to quaternary structure, heterohexamer of two PFD-alpha type and four PFD-beta type subunits.

In terms of biological role, binds specifically to cytosolic chaperonin (c-CPN) and transfers target proteins to it. Binds to nascent polypeptide chain and promotes folding in an environment in which there are many competing pathways for nonnative proteins. This Tetraodon nigroviridis (Spotted green pufferfish) protein is Prefoldin subunit 1 (pfdn1).